Here is a 334-residue protein sequence, read N- to C-terminus: Phospholipase A1 1 (334 aa).

The N-terminal stretch at 1–23 (MMNLKYLLFFCLVQALHYCYAYG) is a signal peptide. The propeptide occupies 24-33 (DPSLSNELDR). The cysteines at positions 37 and 120 are disulfide-linked. The Nucleophile role is filled by Ser170. Residue Asp198 is the Charge relay system of the active site. 2 disulfides stabilise this stretch: Cys209-Cys214 and Cys252-Cys261. Residue His263 is the Charge relay system of the active site. 3 disulfides stabilise this stretch: Cys278-Cys302, Cys279-Cys327, and Cys295-Cys300.

Belongs to the AB hydrolase superfamily. Lipase family. Not glycosylated. Expressed by the venom gland.

It localises to the secreted. It carries out the reaction a 1,2-diacyl-sn-glycero-3-phosphocholine + H2O = a 2-acyl-sn-glycero-3-phosphocholine + a fatty acid + H(+). In terms of biological role, catalyzes the hydrolysis of phosphatidylcholine with phospholipase A1 activity (3.6 U/ml). May act as an allergen and induce hemolytic activity. In vivo, a mixture of this protein and Ves a 1.02 is able to paralyze crickets. This Vespa affinis (Lesser banded hornet) protein is Phospholipase A1 1.